A 360-amino-acid polypeptide reads, in one-letter code: Proline-rich protein 11 (360 aa).

2 disordered regions span residues 20–43 and 174–201; these read KKKE…SPER and PPTL…PPLA. Threonine 33 is modified (phosphothreonine). At serine 40 the chain carries Phosphoserine. Residues 175–201 are compositionally biased toward pro residues; it reads PTLPQPASHFPPPPPPPPLPPPPPPLA. The Phosphodegron motif lies at 285–291; sequence LITPGKS. Threonine 287 is subject to Phosphothreonine. Serine 291 is modified (phosphoserine). Positions 296–304 match the D-box motif; it reads RKLLRKVDV. Residues 316 to 318 carry the KEN box motif; sequence KEN. A Phosphodegron motif is present at residues 325–330; it reads LTPVMT. The segment at 340–360 is disordered; the sequence is AHPRSPTPTLPLSTSSFDEQN. At serine 344 the chain carries Phosphoserine. Phosphothreonine is present on residues threonine 346 and threonine 348. Residues 349 to 360 are compositionally biased toward low complexity; the sequence is LPLSTSSFDEQN.

In terms of processing, ubiquitinated. Rapidly degraded by the proteasome; degradation may involve FBXW7-specific phosphorylated phosphodegron motifs. As to expression, ubiquitously expressed.

Its subcellular location is the cytoplasm. The protein resides in the nucleus. Plays a critical role in cell cycle progression. This is Proline-rich protein 11 (PRR11) from Homo sapiens (Human).